A 202-amino-acid chain; its full sequence is MQPEYRPHIYLASNSPRRRELLDRIGVHYAWMDPGVDEVLGEDESPEVFVLRIALEKARAGYRSLQEDPERELLPVMGADTVVVLDNELLGKPRGREHGLEMLQSLSGTTHRVLTGVALVDDREATRLSVSHVTFRELERAEIERYWATGEPQDKAGGYAIQGRAAVFVEHLEGSYSGVMGLPLFEAAQLLDEFEIDYQRHW.

Asp80 (proton acceptor) is an active-site residue.

The protein belongs to the Maf family. YhdE subfamily. A divalent metal cation serves as cofactor.

It localises to the cytoplasm. The enzyme catalyses dTTP + H2O = dTMP + diphosphate + H(+). It catalyses the reaction UTP + H2O = UMP + diphosphate + H(+). Its function is as follows. Nucleoside triphosphate pyrophosphatase that hydrolyzes dTTP and UTP. May have a dual role in cell division arrest and in preventing the incorporation of modified nucleotides into cellular nucleic acids. This chain is dTTP/UTP pyrophosphatase, found in Alkalilimnicola ehrlichii (strain ATCC BAA-1101 / DSM 17681 / MLHE-1).